Consider the following 402-residue polypeptide: tRNA pseudouridine synthase Pus10 (402 aa).

Residues 37–159 (RLRGERLVEK…QIRVHVQINP (123 aa)) enclose the THUMP domain. D228 functions as the Nucleophile in the catalytic mechanism. Y296 and Y364 together coordinate substrate.

The protein belongs to the pseudouridine synthase Pus10 family.

It catalyses the reaction uridine(54) in tRNA = pseudouridine(54) in tRNA. The enzyme catalyses uridine(55) in tRNA = pseudouridine(55) in tRNA. Functionally, responsible for synthesis of pseudouridine from uracil-54 and uracil-55 in the psi GC loop of transfer RNAs. This Methanothermobacter marburgensis (strain ATCC BAA-927 / DSM 2133 / JCM 14651 / NBRC 100331 / OCM 82 / Marburg) (Methanobacterium thermoautotrophicum) protein is tRNA pseudouridine synthase Pus10.